A 255-amino-acid polypeptide reads, in one-letter code: Probable pyridoxal 5'-phosphate synthase subunit PDX2 (255 aa).

46-48 (GES) contacts L-glutamine. Cys-78 acts as the Nucleophile in catalysis. Residues Arg-108 and 142–143 (IR) each bind L-glutamine. Residues His-202 and Glu-204 each act as charge relay system in the active site. The disordered stretch occupies residues 225 to 255 (GASSSSSKTIVSVGETSAGPEPAKPDLPIFQ).

It belongs to the glutaminase PdxT/SNO family. In terms of assembly, interacts with PDX1.1 or PDX1.3, but not with PDX1.2. Binds to RPA2A. As to expression, strongly expressed in roots, stems, leaves and flowers.

It localises to the cytoplasm. It carries out the reaction aldehydo-D-ribose 5-phosphate + D-glyceraldehyde 3-phosphate + L-glutamine = pyridoxal 5'-phosphate + L-glutamate + phosphate + 3 H2O + H(+). The catalysed reaction is L-glutamine + H2O = L-glutamate + NH4(+). Its pathway is cofactor biosynthesis; pyridoxal 5'-phosphate biosynthesis. Functionally, catalyzes the hydrolysis of glutamine to glutamate and ammonia as part of the biosynthesis of pyridoxal 5'-phosphate. The resulting ammonia molecule is channeled to the active site of PDX1. Involved in the indirect resistance to singlet oxygen-generating photosensitizers. The chain is Probable pyridoxal 5'-phosphate synthase subunit PDX2 (PDX2) from Arabidopsis thaliana (Mouse-ear cress).